Consider the following 245-residue polypeptide: Acetylglutamate kinase (245 aa).

Substrate-binding positions include 41-42 (GG), Arg-63, and Asn-156.

The protein belongs to the acetylglutamate kinase family. ArgB subfamily.

It localises to the cytoplasm. The enzyme catalyses N-acetyl-L-glutamate + ATP = N-acetyl-L-glutamyl 5-phosphate + ADP. The protein operates within amino-acid biosynthesis; L-arginine biosynthesis; N(2)-acetyl-L-ornithine from L-glutamate: step 2/4. Its function is as follows. Catalyzes the ATP-dependent phosphorylation of N-acetyl-L-glutamate. This Streptococcus sanguinis (strain SK36) protein is Acetylglutamate kinase.